We begin with the raw amino-acid sequence, 133 residues long: Ubiquitin-like FUBI-ribosomal protein eS30 fusion protein (133 aa).

The 74-residue stretch at 1–74 (MQLFVRAQEL…LEVAGRMLGG (74 aa)) folds into the Ubiquitin-like domain. Position 125 is an N6-succinyllysine (Lys125).

The protein in the N-terminal section; belongs to the ubiquitin family. In the C-terminal section; belongs to the eukaryotic ribosomal protein eS30 family. In terms of assembly, component of the 40S subunit of the ribosome. FUBI is cleaved from ribosomal protein S30 by the deubiquitinase USP36 before the assembly of ribosomal protein S30 into pre-40S ribosomal particles. FUBI removal from ribosomal protein S30 is a crucial event for the final maturation of pre-40S particles.

It localises to the cytoplasm. The protein resides in the nucleus. In terms of biological role, may have pro-apoptotic activity. Its function is as follows. Component of the 40S subunit of the ribosome. Contributes to the assembly and function of 40S ribosomal subunits. This chain is Ubiquitin-like FUBI-ribosomal protein eS30 fusion protein (FAU), found in Oryctolagus cuniculus (Rabbit).